The following is a 392-amino-acid chain: Enoyl-[acyl-carrier-protein] reductase [NADH] (392 aa).

NAD(+) contacts are provided by residues 46 to 51 (GSSSGY), 72 to 73 (LE), 108 to 109 (DA), and 136 to 137 (VA). Tyr225 provides a ligand contact to substrate. Tyr235 (proton donor) is an active-site residue. NAD(+) is bound by residues Lys244 and 273–275 (LVT).

Belongs to the TER reductase family. As to quaternary structure, monomer.

The catalysed reaction is a 2,3-saturated acyl-[ACP] + NAD(+) = a (2E)-enoyl-[ACP] + NADH + H(+). It participates in lipid metabolism; fatty acid biosynthesis. Functionally, involved in the final reduction of the elongation cycle of fatty acid synthesis (FAS II). Catalyzes the reduction of a carbon-carbon double bond in an enoyl moiety that is covalently linked to an acyl carrier protein (ACP). The chain is Enoyl-[acyl-carrier-protein] reductase [NADH] from Streptomyces avermitilis (strain ATCC 31267 / DSM 46492 / JCM 5070 / NBRC 14893 / NCIMB 12804 / NRRL 8165 / MA-4680).